A 213-amino-acid polypeptide reads, in one-letter code: Phosphoenolpyruvate guanylyltransferase (213 aa).

Residues Thr146, Gly161, and Ser164 each coordinate phosphoenolpyruvate.

The protein belongs to the CofC family.

It catalyses the reaction phosphoenolpyruvate + GTP + H(+) = enolpyruvoyl-2-diphospho-5'-guanosine + diphosphate. Its pathway is cofactor biosynthesis; coenzyme F420 biosynthesis. Its function is as follows. Guanylyltransferase that catalyzes the activation of phosphoenolpyruvate (PEP) as enolpyruvoyl-2-diphospho-5'-guanosine, via the condensation of PEP with GTP. It is involved in the biosynthesis of coenzyme F420, a hydride carrier cofactor. In Mycolicibacterium vanbaalenii (strain DSM 7251 / JCM 13017 / BCRC 16820 / KCTC 9966 / NRRL B-24157 / PYR-1) (Mycobacterium vanbaalenii), this protein is Phosphoenolpyruvate guanylyltransferase.